Consider the following 546-residue polypeptide: Probable lysosomal cobalamin transporter (546 aa).

4 consecutive transmembrane segments (helical) span residues 8–28 (LAQGWIPFTVVVVLAILFSWF), 48–68 (IIALFIALMTTALVPVDIFLV), 102–122 (ILYALLAFFVFVIIPFMYFFF), and 141–161 (YSIGFLIVASVLLLVGAFAPL). The N-linked (GlcNAc...) asparagine glycan is linked to asparagine 167. Transmembrane regions (helical) follow at residues 189-209 (TALSLLIGFLTLIGMLIMITY), 304-324 (MVFGAFFLLVALLIFVSLFIT), 352-372 (IIMVYAQIVFPLDYCLFLLVV), and 407-427 (ALLFMCVMLMLIVLSLNVMLF). 3 N-linked (GlcNAc...) asparagine glycosylation sites follow: asparagine 444, asparagine 452, and asparagine 459. Residues 495-515 (VWFFGACYYWGTWLFLVVFMT) form a helical membrane-spanning segment.

This sequence belongs to the LIMR family. LMBRD1 subfamily.

The protein resides in the lysosome membrane. Probable lysosomal cobalamin transporter. Required to export cobalamin from lysosomes allowing its conversion to cofactors. This is Probable lysosomal cobalamin transporter from Nematostella vectensis (Starlet sea anemone).